Reading from the N-terminus, the 128-residue chain is Fluoride-specific ion channel FluC (128 aa).

A run of 4 helical transmembrane segments spans residues 5-25 (IVAI…LSLA), 35-55 (LGTL…AVVF), 67-87 (LFVI…SVEV), and 96-116 (FGWA…LTAL). Residues glycine 75 and threonine 78 each coordinate Na(+).

The protein belongs to the fluoride channel Fluc/FEX (TC 1.A.43) family.

It is found in the cell inner membrane. The enzyme catalyses fluoride(in) = fluoride(out). Na(+) is not transported, but it plays an essential structural role and its presence is essential for fluoride channel function. Its function is as follows. Fluoride-specific ion channel. Important for reducing fluoride concentration in the cell, thus reducing its toxicity. The protein is Fluoride-specific ion channel FluC of Burkholderia cenocepacia (strain HI2424).